The sequence spans 268 residues: Agamous-like MADS-box protein AGL15 (268 aa).

The MADS-box domain maps to 1-61; sequence MGRGKIEIKR…GKLFEYSSTG (61 aa). Residues 80–170 enclose the K-box domain; sequence AEEDCAEVDI…RRQVQELRSF (91 aa). The segment at 205-268 is disordered; that stretch reads TDSDTTLQLG…PEAKRQRFSV (64 aa). Residues 218–232 are compositionally biased toward basic and acidic residues; sequence EAHDRRTNEGERESP. The span at 233-244 shows a compositional bias: polar residues; sequence SSDSVTTNTSSE.

Homodimer. Interacts with SVP, AGL24, AP1, AGL6, AG, AGL1, AGL11, AGL5, AGL16, SOC1 and AGL21. In terms of tissue distribution, expressed at low levels in flowers and siliques. Also present in seedlings. Detected during embryogenesis and accumulates during early seed development (at protein level). Expressed in shoot apices and the base of leaf petioles.

The protein localises to the nucleus. Its subcellular location is the cytoplasm. In terms of biological role, transcription factor involved in the negative regulation of flowering, probably through the photoperiodic pathway. Acts both as an activator and as a repressor of transcription. Binds DNA in a sequence-specific manner in large CArG motif 5'-CC (A/T)8 GG-3'. Participates probably in the regulation of programs active during the early stages of embryo development. Prevents premature perianth senescence and abscission, fruits development and seed desiccation. Stimulates the expression of at least DTA4, LEC2, FUS3, ABI3, AT4G38680/CSP2 and GRP2B/CSP4. Can enhance somatic embryo development in vitro. This is Agamous-like MADS-box protein AGL15 (AGL15) from Arabidopsis thaliana (Mouse-ear cress).